A 708-amino-acid polypeptide reads, in one-letter code: MSKRLRSSDVCADCNGPDPSWASVNRGTFICDECCSVHRSLGRHISQVRHLKHTAWPPTLLQMVETLYNNGANSIWEHSLLDPASIMSGRRKANPQDKVHPNKAEFIRAKYQMLAFVHRLPCREDDSVTAKDLSKQLHSSVRTGNLETCLRLLSLGAQANFFHPEKGSTPLHVASKAGQILQAELLAVYGADPGTQDSSGKTPVDYARQGGHHELAERLIEIQYELTDRLAFYLCGRKPDHKSGQHFLIPQRADSLDLSELAKAAKKKLQSLSNHLFEELAMDVYDEVDRRETDAVWLATQNHSTLVTETTVVPFLPVNPEYSSTRNQGRQKLARFNAHEFATLVIDILSDAKRRQQGSPLSRSKDNVELILRTVSTQHSTESQDNDQPDYDSVASDEDTDVETRASKANRQKLQTLQSENSSLRRQATASACQVQTGSDHKDTASHSSLKRRPSARGSRPMSMYETGSGQKPYLPMGEASHPEESRTRLQPFPTHIGRSALVTSSSSLPSFPSTLSWSRDESARRASRLEKQNSTPESDYDNTACDPEPDDTGSTRKGRQRSMLWQGDGLLPDTAEPHSVPSPTLPSTEDVIRKTEQITKNIQELLRAAQENKHDSYIPCSERIHVAVTEMAALFPKKPKSDTVRTSLRLLTSSAYRLQSECRKALPGDSSLPTDVQLVTQQVIQCAYDIAKAAKQLVTITTKENSS.

The region spanning 1–124 (MSKRLRSSDV…AFVHRLPCRE (124 aa)) is the Arf-GAP domain. Residues 11–34 (CADCNGPDPSWASVNRGTFICDEC) form a C4-type zinc finger. 3 ANK repeats span residues 132-161 (DLSK…QANF), 166-195 (KGST…DPGT), and 199-228 (SGKT…ELTD). Residues 376 to 592 (STQHSTESQD…SPTLPSTEDV (217 aa)) form a disordered region. The segment covering 384-401 (QDNDQPDYDSVASDEDTD) has biased composition (acidic residues). A phosphoserine mark is found at serine 393 and serine 396. A Phosphothreonine modification is found at threonine 400. Positions 407–438 (SKANRQKLQTLQSENSSLRRQATASACQVQTG) are enriched in polar residues. The segment covering 504-518 (TSSSSLPSFPSTLSW) has biased composition (low complexity). A phosphoserine mark is found at serine 508, serine 511, and serine 519. Positions 519-532 (SRDESARRASRLEK) are enriched in basic and acidic residues. Threonine 536 is modified (phosphothreonine). Serine 563 is modified (phosphoserine).

In terms of assembly, may form heterooligomers with GIT1. Directly interacts with protein Piccolo/PCLO. Interacts with PPFIA1 and PPFIA2. Interacts with ARHGEF7. Identified in a complex with ARHGEF6 and BIN2. Interacts with PAK3. Interacts with PXN/paxillin. Interacts with TGFB1I1. Forms a complex with EFNB1 and GRB4/NCK2. In terms of processing, tyrosine phosphorylated when coexpressed in cells with PTK2/FAK1 and SRC. As to expression, expressed in the brain (at protein level).

In terms of biological role, GTPase-activating protein for ADP ribosylation factor family members, including ARF1. The protein is ARF GTPase-activating protein GIT2 (Git2) of Mus musculus (Mouse).